Consider the following 744-residue polypeptide: 1,4-alpha-glucan branching enzyme GlgB (744 aa).

Residues 1 to 23 (MSGPEDPADRRHGEVPAPRRDIP) form a disordered region. Residues 7–23 (PADRRHGEVPAPRRDIP) show a composition bias toward basic and acidic residues. The Nucleophile role is filled by D424. E476 acts as the Proton donor in catalysis.

Belongs to the glycosyl hydrolase 13 family. GlgB subfamily. In terms of assembly, monomer.

It carries out the reaction Transfers a segment of a (1-&gt;4)-alpha-D-glucan chain to a primary hydroxy group in a similar glucan chain.. It participates in glycan biosynthesis; glycogen biosynthesis. Catalyzes the formation of the alpha-1,6-glucosidic linkages in glycogen by scission of a 1,4-alpha-linked oligosaccharide from growing alpha-1,4-glucan chains and the subsequent attachment of the oligosaccharide to the alpha-1,6 position. This chain is 1,4-alpha-glucan branching enzyme GlgB, found in Nocardia farcinica (strain IFM 10152).